Reading from the N-terminus, the 126-residue chain is Glycine cleavage system H protein (126 aa).

In terms of domain architecture, Lipoyl-binding spans 22–104; that stretch reads VATIGITEYA…YEKAWMVKVE (83 aa). N6-lipoyllysine is present on lysine 63.

The protein belongs to the GcvH family. The glycine cleavage system is composed of four proteins: P, T, L and H. The cofactor is (R)-lipoate.

The glycine cleavage system catalyzes the degradation of glycine. The H protein shuttles the methylamine group of glycine from the P protein to the T protein. In terms of biological role, is also involved in protein lipoylation via its role as an octanoyl/lipoyl carrier protein intermediate. The protein is Glycine cleavage system H protein of Staphylococcus aureus (strain MSSA476).